Here is a 57-residue protein sequence, read N- to C-terminus: Small ribosomal subunit protein bS21 (57 aa).

Residues 24 to 57 (SKSGTLQESRKREFYEKPSVKRKKKSEAARKRKF) form a disordered region. Residues 31-42 (ESRKREFYEKPS) show a composition bias toward basic and acidic residues. Residues 43–57 (VKRKKKSEAARKRKF) show a composition bias toward basic residues.

Belongs to the bacterial ribosomal protein bS21 family.

The chain is Small ribosomal subunit protein bS21 (rpsU) from Listeria innocua serovar 6a (strain ATCC BAA-680 / CLIP 11262).